The primary structure comprises 93 residues: UPF0358 protein LMHCC_1561 (93 aa).

It belongs to the UPF0358 family.

The polypeptide is UPF0358 protein LMHCC_1561 (Listeria monocytogenes serotype 4a (strain HCC23)).